Here is a 190-residue protein sequence, read N- to C-terminus: MTIPTISELKKDRIIPHVFPNDKIDLNVDLFISFKAGKEVNHGNVLDIAGTGSVPRNIKFSEEPPDGYCFVLFMVDPDYPSRLRPDGKEYIHWVVSGIKTKELIKGTQKNCVTILPYVGPSIKKGTGLHRISFIISLIKEEDKDNITGLPHYKGEKYITRVKFNNYESVHNIAQINNMKIVGYNWCQIEG.

Belongs to the phosphatidylethanolamine-binding protein family.

This chain is Putative phosphatidylethanolamine-binding protein, found in Plasmodium falciparum.